Consider the following 243-residue polypeptide: Ribosomal RNA small subunit methyltransferase G (243 aa).

S-adenosyl-L-methionine is bound by residues glycine 79, phenylalanine 84, 130 to 131 (AE), and arginine 150. The interval 222–243 (KPTPNKYPRKPGIPNKQPLGGA) is disordered.

It belongs to the methyltransferase superfamily. RNA methyltransferase RsmG family.

It localises to the cytoplasm. In terms of biological role, specifically methylates the N7 position of a guanine in 16S rRNA. The polypeptide is Ribosomal RNA small subunit methyltransferase G (Lacticaseibacillus paracasei (strain ATCC 334 / BCRC 17002 / CCUG 31169 / CIP 107868 / KCTC 3260 / NRRL B-441) (Lactobacillus paracasei)).